The sequence spans 308 residues: Glycerol-3-phosphate dehydrogenase [NAD(P)+] (308 aa).

Positions 15, 35, 36, and 83 each coordinate NADPH. Positions 83 and 111 each coordinate sn-glycerol 3-phosphate. NADPH is bound at residue serine 115. Positions 166, 219, 229, 230, and 231 each coordinate sn-glycerol 3-phosphate. Lysine 166 acts as the Proton acceptor in catalysis. An NADPH-binding site is contributed by arginine 230. Glutamate 256 contributes to the NADPH binding site.

The protein belongs to the NAD-dependent glycerol-3-phosphate dehydrogenase family.

The protein resides in the cytoplasm. It carries out the reaction sn-glycerol 3-phosphate + NAD(+) = dihydroxyacetone phosphate + NADH + H(+). The catalysed reaction is sn-glycerol 3-phosphate + NADP(+) = dihydroxyacetone phosphate + NADPH + H(+). The protein operates within membrane lipid metabolism; glycerophospholipid metabolism. Its function is as follows. Catalyzes the reduction of the glycolytic intermediate dihydroxyacetone phosphate (DHAP) to sn-glycerol 3-phosphate (G3P), the key precursor for phospholipid synthesis. This is Glycerol-3-phosphate dehydrogenase [NAD(P)+] from Synechococcus elongatus (strain ATCC 33912 / PCC 7942 / FACHB-805) (Anacystis nidulans R2).